Reading from the N-terminus, the 319-residue chain is Pantothenate kinase (319 aa).

Residue 101-108 (GSVAVGKS) participates in ATP binding.

The protein belongs to the prokaryotic pantothenate kinase family.

It localises to the cytoplasm. It carries out the reaction (R)-pantothenate + ATP = (R)-4'-phosphopantothenate + ADP + H(+). The protein operates within cofactor biosynthesis; coenzyme A biosynthesis; CoA from (R)-pantothenate: step 1/5. The sequence is that of Pantothenate kinase from Clavibacter michiganensis subsp. michiganensis (strain NCPPB 382).